A 309-amino-acid chain; its full sequence is Minor serine/threonine-protein phosphatase PP2A-1 catalytic subunit (309 aa).

Mn(2+) contacts are provided by Asp-57, His-59, Asp-85, and Asn-117. Catalysis depends on His-118, which acts as the Proton donor. His-167 and His-241 together coordinate Mn(2+). Leu-309 carries the leucine methyl ester modification.

Belongs to the PPP phosphatase family. PP-2A subfamily. Mn(2+) serves as cofactor.

It catalyses the reaction O-phospho-L-seryl-[protein] + H2O = L-seryl-[protein] + phosphate. The enzyme catalyses O-phospho-L-threonyl-[protein] + H2O = L-threonyl-[protein] + phosphate. Functionally, essential role in cell cycle control. PP2A may be involved in controlling the entry into mitosis, possibly acting as an inhibitor. In Schizosaccharomyces pombe (strain 972 / ATCC 24843) (Fission yeast), this protein is Minor serine/threonine-protein phosphatase PP2A-1 catalytic subunit (ppa1).